A 252-amino-acid chain; its full sequence is 4-hydroxy-tetrahydrodipicolinate reductase (252 aa).

NAD(+)-binding positions include 8–13, 84–86, and 108–111; these read GCCGKM, CST, and SANM. Histidine 141 (proton donor/acceptor) is an active-site residue. Histidine 142 contributes to the (S)-2,3,4,5-tetrahydrodipicolinate binding site. The Proton donor role is filled by lysine 145. 151–152 provides a ligand contact to (S)-2,3,4,5-tetrahydrodipicolinate; sequence GT.

This sequence belongs to the DapB family.

The protein resides in the cytoplasm. It carries out the reaction (S)-2,3,4,5-tetrahydrodipicolinate + NAD(+) + H2O = (2S,4S)-4-hydroxy-2,3,4,5-tetrahydrodipicolinate + NADH + H(+). The catalysed reaction is (S)-2,3,4,5-tetrahydrodipicolinate + NADP(+) + H2O = (2S,4S)-4-hydroxy-2,3,4,5-tetrahydrodipicolinate + NADPH + H(+). It functions in the pathway amino-acid biosynthesis; L-lysine biosynthesis via DAP pathway; (S)-tetrahydrodipicolinate from L-aspartate: step 4/4. Catalyzes the conversion of 4-hydroxy-tetrahydrodipicolinate (HTPA) to tetrahydrodipicolinate. The sequence is that of 4-hydroxy-tetrahydrodipicolinate reductase from Clostridium botulinum (strain Eklund 17B / Type B).